The sequence spans 612 residues: Elongation factor 4 (612 aa).

One can recognise a tr-type G domain in the interval 11–193 (KHIRNFSIIA…KLVTDVPAPT (183 aa)). GTP is bound by residues 23–28 (DHGKST) and 140–143 (NKID).

The protein belongs to the TRAFAC class translation factor GTPase superfamily. Classic translation factor GTPase family. LepA subfamily.

The protein localises to the cell membrane. The catalysed reaction is GTP + H2O = GDP + phosphate + H(+). Its function is as follows. Required for accurate and efficient protein synthesis under certain stress conditions. May act as a fidelity factor of the translation reaction, by catalyzing a one-codon backward translocation of tRNAs on improperly translocated ribosomes. Back-translocation proceeds from a post-translocation (POST) complex to a pre-translocation (PRE) complex, thus giving elongation factor G a second chance to translocate the tRNAs correctly. Binds to ribosomes in a GTP-dependent manner. This Latilactobacillus sakei subsp. sakei (strain 23K) (Lactobacillus sakei subsp. sakei) protein is Elongation factor 4.